The chain runs to 131 residues: Small ribosomal subunit protein uS19 (131 aa).

The protein belongs to the universal ribosomal protein uS19 family.

In terms of biological role, protein S19 forms a complex with S13 that binds strongly to the 16S ribosomal RNA. The sequence is that of Small ribosomal subunit protein uS19 from Cenarchaeum symbiosum (strain A).